We begin with the raw amino-acid sequence, 414 residues long: Eukaryotic initiation factor 4A-3 (414 aa).

An N-acetylalanine modification is found at A2. A Q motif motif is present at residues 41–69 (DSFDAMELQPDLLRGIYAYGFEKPSAIQQ). The region spanning 72–242 (IIPFCKGLDV…RKFMNKPVRI (171 aa)) is the Helicase ATP-binding domain. Residue 85–92 (AQSGTGKT) coordinates ATP. At S106 the chain carries Phosphoserine. A Phosphothreonine modification is found at T147. Residues 190–193 (DEAD) carry the DEAD box motif. In terms of domain architecture, Helicase C-terminal spans 253–414 (GIKQFYVNVD…ELPSNVADLL (162 aa)).

The protein belongs to the DEAD box helicase family. eIF4A subfamily. EIF4F is a multi-subunit complex, the composition of which varies with external and internal environmental conditions. It is composed of at least EIF4A, EIF4E and EIF4G.

It is found in the cytoplasm. The enzyme catalyses ATP + H2O = ADP + phosphate + H(+). ATP-dependent RNA helicase which is a subunit of the eIF4F complex involved in cap recognition and is required for mRNA binding to ribosome. In the current model of translation initiation, eIF4A unwinds RNA secondary structures in the 5'-UTR of mRNAs which is necessary to allow efficient binding of the small ribosomal subunit, and subsequent scanning for the initiator codon. This is Eukaryotic initiation factor 4A-3 (TIF4A-3) from Arabidopsis thaliana (Mouse-ear cress).